The chain runs to 437 residues: Probable glycine dehydrogenase (decarboxylating) subunit 1 (437 aa).

The protein belongs to the GcvP family. N-terminal subunit subfamily. The glycine cleavage system is composed of four proteins: P, T, L and H. In this organism, the P 'protein' is a heterodimer of two subunits.

It catalyses the reaction N(6)-[(R)-lipoyl]-L-lysyl-[glycine-cleavage complex H protein] + glycine + H(+) = N(6)-[(R)-S(8)-aminomethyldihydrolipoyl]-L-lysyl-[glycine-cleavage complex H protein] + CO2. In terms of biological role, the glycine cleavage system catalyzes the degradation of glycine. The P protein binds the alpha-amino group of glycine through its pyridoxal phosphate cofactor; CO(2) is released and the remaining methylamine moiety is then transferred to the lipoamide cofactor of the H protein. This Thermotoga maritima (strain ATCC 43589 / DSM 3109 / JCM 10099 / NBRC 100826 / MSB8) protein is Probable glycine dehydrogenase (decarboxylating) subunit 1.